The primary structure comprises 56 residues: Large ribosomal subunit protein bL33 (56 aa).

This sequence belongs to the bacterial ribosomal protein bL33 family.

The sequence is that of Large ribosomal subunit protein bL33 from Dichelobacter nodosus (strain VCS1703A).